A 307-amino-acid chain; its full sequence is Solute carrier family 25 member 53 (307 aa).

Positions 1-23 are disordered; that stretch reads MGEQNHSPGKELQHRTRAEAPGK. Over residues 8–22 the composition is skewed to basic and acidic residues; sequence PGKELQHRTRAEAPG. Solcar repeat units follow at residues 25-105, 112-202, and 210-302; these read SWHS…LLCF, HTLG…IQDG, and HWVP…HSRK. Transmembrane regions (helical) follow at residues 31–51, 82–102, 112–132, 181–201, 215–235, and 269–290; these read YALGAVSNFMSTFLTFPIYKV, YPPLLSKTLQGTLLFGTYDSL, HTLGHRWAAGLMSGVVEAVAL, VLARNSLGSALYFSFKDPIQD, LVSGSVNGTITCLVLYPLIVL, and IYRGGSLVILRSSVTWGLTTAI.

It belongs to the mitochondrial carrier (TC 2.A.29) family.

The protein resides in the mitochondrion inner membrane. This chain is Solute carrier family 25 member 53 (SLC25A53), found in Homo sapiens (Human).